Here is a 367-residue protein sequence, read N- to C-terminus: tRNA-specific 2-thiouridylase MnmA (367 aa).

ATP contacts are provided by residues 13 to 20 (GLSGGVDS) and methionine 39. The segment at 99 to 101 (NPD) is interaction with target base in tRNA. The Nucleophile role is filled by cysteine 104. A disulfide bridge links cysteine 104 with cysteine 200. Glycine 128 contributes to the ATP binding site. Residues 150–152 (KDQ) are interaction with tRNA. The Cysteine persulfide intermediate role is filled by cysteine 200. The interaction with tRNA stretch occupies residues 307-308 (RY).

It belongs to the MnmA/TRMU family.

It localises to the cytoplasm. It catalyses the reaction S-sulfanyl-L-cysteinyl-[protein] + uridine(34) in tRNA + AH2 + ATP = 2-thiouridine(34) in tRNA + L-cysteinyl-[protein] + A + AMP + diphosphate + H(+). In terms of biological role, catalyzes the 2-thiolation of uridine at the wobble position (U34) of tRNA, leading to the formation of s(2)U34. This is tRNA-specific 2-thiouridylase MnmA from Neisseria meningitidis serogroup C (strain 053442).